The chain runs to 284 residues: Probable palmitoyltransferase ZDHHC24 (284 aa).

Over 1–18 (MGQPWAAGSTDGAPAQLP) the chain is Cytoplasmic. A helical transmembrane segment spans residues 19 to 39 (LVLTALWAAAVGLELAYVLVL). At 40–52 (GPGPPPLGPLARA) the chain is on the extracellular side. A helical transmembrane segment spans residues 53 to 73 (LQLALAAFQLLNLLGNVGLFL). Over 74-137 (RSDPSIRGVM…GRCVGFGNYR (64 aa)) the chain is Cytoplasmic. Positions 94–144 (AYCYQCQSQVPPRSGHCSACRVCILRRDHHCRLLGRCVGFGNYRPFLCLLL) constitute a DHHC domain. The S-palmitoyl cysteine intermediate role is filled by Cys-124. Residues 138–158 (PFLCLLLHAAGVLLHVSVLLG) traverse the membrane as a helical segment. Residues 159–166 (PALSALLR) are Extracellular-facing. Residues 167–187 (AHTPLHMAALLLLPWLMLLTG) traverse the membrane as a helical segment. Over 188 to 201 (RVSLAQFALAFVTD) the chain is Cytoplasmic. A helical transmembrane segment spans residues 202 to 222 (TCVAGALLCGAGLLFHGMLLL). Topologically, residues 223–284 (RGQTTWEWAR…TTADVGHTAS (62 aa)) are extracellular.

The protein belongs to the DHHC palmitoyltransferase family.

It is found in the membrane. The enzyme catalyses L-cysteinyl-[protein] + hexadecanoyl-CoA = S-hexadecanoyl-L-cysteinyl-[protein] + CoA. Functionally, probable palmitoyltransferase that could catalyze the addition of palmitate onto various protein substrates. In Homo sapiens (Human), this protein is Probable palmitoyltransferase ZDHHC24.